The primary structure comprises 66 residues: Prophage transcriptional regulatory protein (66 aa).

The polypeptide is Prophage transcriptional regulatory protein (croE) (Escherichia coli (strain K12)).